A 132-amino-acid polypeptide reads, in one-letter code: Putative holo-[acyl-carrier-protein] synthase (132 aa).

2 residues coordinate Mg(2+): D6 and E67.

The protein belongs to the P-Pant transferase superfamily. AcpS family.

It catalyses the reaction apo-[ACP] + CoA = holo-[ACP] + adenosine 3',5'-bisphosphate + H(+). Functionally, transfers the 4'-phosphopantetheine moiety from coenzyme A to a Ser of acyl-carrier-protein. This is Putative holo-[acyl-carrier-protein] synthase (new8) from Schizosaccharomyces pombe (strain 972 / ATCC 24843) (Fission yeast).